The following is a 268-amino-acid chain: Hemin import ATP-binding protein HmuV (268 aa).

An ABC transporter domain is found at 5–241; sequence LKAEAASFAL…ELIADVFDVA (237 aa). 37–44 contributes to the ATP binding site; it reads GPNGAGKS.

Belongs to the ABC transporter superfamily. Heme (hemin) importer (TC 3.A.1.14.5) family. As to quaternary structure, the complex is composed of two ATP-binding proteins (HmuV), two transmembrane proteins (HmuU) and a solute-binding protein (HmuT).

The protein localises to the cell inner membrane. Its function is as follows. Part of the ABC transporter complex HmuTUV involved in hemin import. Responsible for energy coupling to the transport system. The polypeptide is Hemin import ATP-binding protein HmuV (Rhodopseudomonas palustris (strain ATCC BAA-98 / CGA009)).